We begin with the raw amino-acid sequence, 282 residues long: MTLFEAIILGIVQGLTEFLPISSTAHLRIVPALAGWQDPGAAFSAIVQIGTLAAVLIYFYKDIHSITRGVFDGLRSGRPFETQESRMGWMIAAGTMPIVILGLLFKTEIETSLRSLYWISVALIVLALMLTLAEWLMKRRADKGLKAKTMNDIGWKEALLIGLAQSIALIPGSSRSGVTITGGLFLNLSRETAARFSFLLSLPAVFAAGIYQLYETRDQLMASGSDLLNLAVATLFAGIVGYASIAFLINYLKQHSTALFILYRIALGVGILGLIANGYLQA.

A run of 7 helical transmembrane segments spans residues 40–60 (GAAFSAIVQIGTLAAVLIYFY), 87–107 (MGWMIAAGTMPIVILGLLFKT), 116–136 (LYWISVALIVLALMLTLAEWL), 153–173 (IGWKEALLIGLAQSIALIPGS), 196–216 (FSFLLSLPAVFAAGIYQLYET), 229–249 (NLAVATLFAGIVGYASIAFLI), and 256–276 (STALFILYRIALGVGILGLIA).

Belongs to the UppP family.

Its subcellular location is the cell inner membrane. It catalyses the reaction di-trans,octa-cis-undecaprenyl diphosphate + H2O = di-trans,octa-cis-undecaprenyl phosphate + phosphate + H(+). Catalyzes the dephosphorylation of undecaprenyl diphosphate (UPP). Confers resistance to bacitracin. This is Undecaprenyl-diphosphatase from Chlorobium phaeobacteroides (strain BS1).